The primary structure comprises 274 residues: Triosephosphate isomerase (274 aa).

Position 13–15 (13–15 (NWK)) interacts with substrate. The Electrophile role is filled by histidine 98. Residue glutamate 170 is the Proton acceptor of the active site. The substrate site is built by glycine 176 and serine 216.

It belongs to the triosephosphate isomerase family. Homodimer.

Its subcellular location is the cytoplasm. The enzyme catalyses D-glyceraldehyde 3-phosphate = dihydroxyacetone phosphate. The protein operates within carbohydrate biosynthesis; gluconeogenesis. It participates in carbohydrate degradation; glycolysis; D-glyceraldehyde 3-phosphate from glycerone phosphate: step 1/1. Involved in the gluconeogenesis. Catalyzes stereospecifically the conversion of dihydroxyacetone phosphate (DHAP) to D-glyceraldehyde-3-phosphate (G3P). This chain is Triosephosphate isomerase, found in Aster yellows witches'-broom phytoplasma (strain AYWB).